A 123-amino-acid polypeptide reads, in one-letter code: MTTIQQLIRKKRKPIENKTKSPALRNCPQRRGVCIRVYTTTPKKPNSALRKVARVRLTSSFEVTAYIPGIGHNLQEHSVVLVRGGRVKDLPGVRYHIVRGTLDTIGVKDRCQGRSKYGTKRPK.

This sequence belongs to the universal ribosomal protein uS12 family. Part of the 30S ribosomal subunit.

It localises to the plastid. Its subcellular location is the chloroplast. Its function is as follows. With S4 and S5 plays an important role in translational accuracy. Located at the interface of the 30S and 50S subunits. This chain is Small ribosomal subunit protein uS12c (rps12), found in Chara vulgaris (Common stonewort).